A 294-amino-acid chain; its full sequence is GTRLNGAKGKIDAKVHSPSGAVEECHVSELEPDKYAVRFIPHENGIHTIDVKFNGSHVVGSPFKVRVGEPGQAGNPALVSAYGAGLEGGTTGIQSEFFINTTRAGPGTLSVTIEGPSKVKMDCQETPEGYKVMYTPMAPGNYLIGVKYGGPNHIVGSPFKAKVTGQRLVGPGSTNETSSILVESVTRSSTETCYSAIPKASSDASKVTSKGAGLSKAFVGQKSSFLVDCSKAGSNMLLIGVHGPTTPCEEVSMKHVGSQQYNVTYVVKERGEYVLAVKWGEEHIPGSPFHVTVP.

Filamin repeat units lie at residues 1–67 (GTRL…KVRV) and 71–163 (GQAG…KAKV). 2 positions are modified to phosphoserine: Ser-61 and Ser-157. Lys-160 participates in a covalent cross-link: Glycyl lysine isopeptide (Lys-Gly) (interchain with G-Cter in ISG15). Positions 164 to 198 (TGQRLVGPGSTNETSSILVESVTRSSTETCYSAIP) are hinge 2. The self-association site, tail stretch occupies residues 164–294 (TGQRLVGPGS…PGSPFHVTVP (131 aa)). Residues Ser-173 and Ser-184 each carry the phosphoserine modification. The Filamin 24 repeat unit spans residues 199-293 (KASSDASKVT…IPGSPFHVTV (95 aa)). N6-succinyllysine is present on residues Lys-210 and Lys-216. Lys-268 is modified (N6-acetyllysine).

Belongs to the filamin family. As to quaternary structure, homodimer. Interacts with FLNA, FLNC, INPPL1, ITGB1A, ITGB1D, ITGB3, ITGB6, MYOT, MYOZ1, PSEN1 and PSEN2. Interacts with MICALL2. Interacts with RFLNA and RFLNB. Interacts with HTLV-I viral p13 protein. Interacts with ASB2; the interaction targets FLNB for proteasomal degradation. ISGylation prevents ability to interact with the upstream activators of the JNK cascade and inhibits IFNA-induced JNK signaling. Post-translationally, ubiquitination by a SCF-like complex containing ASB2 leads to proteasomal degradation which promotes muscle differentiation.

Its subcellular location is the cytoplasm. It localises to the cell cortex. The protein resides in the cytoskeleton. The protein localises to the myofibril. It is found in the sarcomere. Its subcellular location is the z line. Its function is as follows. Connects cell membrane constituents to the actin cytoskeleton. May promote orthogonal branching of actin filaments and links actin filaments to membrane glycoproteins. Anchors various transmembrane proteins to the actin cytoskeleton. In Oryctolagus cuniculus (Rabbit), this protein is Filamin-B (FLNB).